The following is a 287-amino-acid chain: Heavy metal-associated isoprenylated plant protein 4 (287 aa).

HMA domains lie at 14 to 80 and 112 to 176; these read IITA…VELI and IRTT…KHAE. A metal cation-binding residues include Cys-25, Cys-28, Cys-123, and Cys-126. Positions 179-235 form a coiled coil; sequence SSKTEEEKKKEEEDKKKKEEEDKKKKEDEKKKEEEKKKEEENKKKEGEKKKEEVKVE. A disordered region spans residues 181 to 232; the sequence is KTEEEKKKEEEDKKKKEEEDKKKKEDEKKKEEEKKKEEENKKKEGEKKKEEV. Cys-284 bears the Cysteine methyl ester mark. Residue Cys-284 is the site of S-farnesyl cysteine attachment. Residues 285 to 287 constitute a propeptide, removed in mature form; that stretch reads RIV.

Belongs to the HIPP family.

In terms of biological role, heavy-metal-binding protein. The protein is Heavy metal-associated isoprenylated plant protein 4 of Arabidopsis thaliana (Mouse-ear cress).